The following is a 103-amino-acid chain: Small ribosomal subunit protein uS10 (103 aa).

It belongs to the universal ribosomal protein uS10 family. Part of the 30S ribosomal subunit.

Functionally, involved in the binding of tRNA to the ribosomes. The chain is Small ribosomal subunit protein uS10 from Stenotrophomonas maltophilia (strain R551-3).